Here is a 531-residue protein sequence, read N- to C-terminus: Importin subunit alpha-2 (531 aa).

Over residues methionine 1–histidine 10 the composition is skewed to polar residues. Residues methionine 1 to leucine 88 are disordered. An IBB domain is found at glutamate 5–glycine 67. Basic and acidic residues-rich tracts occupy residues asparagine 11–glycine 20 and threonine 29–glycine 50. Over residues aspartate 62–glutamate 75 the composition is skewed to acidic residues. ARM repeat units lie at residues asparagine 122–serine 161, threonine 164–glycine 203, lysine 250–aspartate 290, aspartate 293–threonine 331, aspartate 334–alanine 374, glutamine 377–glutamine 416, and asparagine 420–leucine 459. The segment at aspartate 511–phenylalanine 531 is disordered. Residues glutamate 515–phenylalanine 531 show a composition bias toward basic and acidic residues.

The protein belongs to the importin alpha family. In terms of assembly, forms a complex with an importin beta subunit. Interacts with akir-1. Germline tissues. Expressed exclusively in germ line cells from the early embryonic through adult stages.

It is found in the cytoplasm. Its subcellular location is the nucleus. The protein localises to the nucleus envelope. Nuclear transport receptor that mediates nuclear import of proteins, and which is involved in sister chromatid cohesion. Binds specifically and directly to substrates containing either a simple or bipartite nuclear localization signals (NLS) motif. Promotes docking of import substrates to the nuclear envelope. Together with akir-1 adapter, required for the import and load of cohesin complex proteins in meiotic nuclei. This Caenorhabditis elegans protein is Importin subunit alpha-2.